The sequence spans 270 residues: uncharacterized protein (270 aa).

The protein resides in the virion. This is an uncharacterized protein from Acanthamoeba polyphaga (Amoeba).